The following is a 479-amino-acid chain: Ammonium transporter Rh type C (479 aa).

Residues 1–9 lie on the Cytoplasmic side of the membrane; the sequence is MAWNTNLRW. Residues 10–30 traverse the membrane as a helical segment; sequence RLPLTCLLLQVIMVILFGVFV. At 31–60 the chain is on the extracellular side; sequence RYDFEADAHWWSERTHKNLSDMENEFYYRY. An N-linked (GlcNAc...) asparagine glycan is attached at Asn48. The helical transmembrane segment at 61–81 threads the bilayer; it reads PSFQDVHVMVFVGFGFLMTFL. Residues 82–85 lie on the Cytoplasmic side of the membrane; that stretch reads QRYG. The helical transmembrane segment at 86–106 threads the bilayer; sequence FSAVGFNFLLAAFGIQWALLM. Residues 107 to 123 lie on the Extracellular side of the membrane; that stretch reads QGWFHFLQDRYIVVGVE. A helical transmembrane segment spans residues 124-144; it reads NLINADFCVASVCVAFGAVLG. The Cytoplasmic segment spans residues 145-148; that stretch reads KVSP. A helical membrane pass occupies residues 149 to 169; sequence IQLLIMTFFQVTLFAVNEFIL. Over 170 to 177 the chain is Extracellular; it reads LNLLKVKD. Residues 178–200 form a helical membrane-spanning segment; sequence AGGSMTIHTFGAYFGLTVTRILY. Residues 201 to 218 lie on the Cytoplasmic side of the membrane; it reads RRNLEQSKERQNSVYQSD. The chain crosses the membrane as a helical span at residues 219–239; it reads LFAMIGTLFLWMYWPSFNSAI. Residues 240–250 lie on the Extracellular side of the membrane; sequence SYHGDSQHRAA. A helical membrane pass occupies residues 251 to 271; that stretch reads INTYCSLAACVLTSVAISSAL. The Cytoplasmic portion of the chain corresponds to 272 to 281; the sequence is HKKGKLDMVH. The helical transmembrane segment at 282–302 threads the bilayer; that stretch reads IQNATLAGGVAVGTAAEMMLM. A topological domain (extracellular) is located at residue Pro303. Residues 304–324 form a helical membrane-spanning segment; it reads YGALIIGFVCGIISTLGFVYL. Residues 325 to 345 lie on the Cytoplasmic side of the membrane; sequence TPFLESRLHIQDTCGINNLHG. A helical membrane pass occupies residues 346–366; that stretch reads IPGIIGGIVGAVTAASASLEV. Topologically, residues 367–394 are extracellular; sequence YGKEGLVHSFDFQGFNGDWTARTQGKFQ. A helical membrane pass occupies residues 395-415; the sequence is IYGLLVTLAMALMGGIIVGLI. Topologically, residues 416 to 479 are cytoplasmic; it reads LRLPFWGQPS…PMASSVPLVP (64 aa).

It belongs to the ammonium transporter (TC 2.A.49) family. Rh subfamily. As to quaternary structure, homotrimer. Post-translationally, N-glycosylated. In terms of tissue distribution, expressed in brain, testis, placenta, pancreas, esophagus and prostate. Expressed in squamous epithelial tissues (at protein level). Expressed in kidney.

Its subcellular location is the cell membrane. It localises to the apical cell membrane. The catalysed reaction is NH4(+)(in) = NH4(+)(out). It catalyses the reaction methylamine(out) = methylamine(in). It carries out the reaction CO2(out) = CO2(in). Its function is as follows. Ammonium transporter involved in the maintenance of acid-base homeostasis. Transports ammonium and its related derivative methylammonium across the plasma membrane of epithelial cells likely contributing to renal transepithelial ammonia transport and ammonia metabolism. Postulated to primarily mediate an electroneutral bidirectional transport of NH3 ammonia species according to a mechanism that implies interaction of an NH4(+) ion with acidic residues of the pore entry followed by dissociation of NH4(+) into NH3 and H(+). As a result NH3 transits through the central pore and is protonated on the extracellular side reforming NH4(+). May act as a CO2 channel providing for renal acid secretion. This Homo sapiens (Human) protein is Ammonium transporter Rh type C (RHCG).